Reading from the N-terminus, the 217-residue chain is Ribonuclease HII (217 aa).

Residues W34 to D217 form the RNase H type-2 domain. 3 residues coordinate a divalent metal cation: D40, E41, and D131.

Belongs to the RNase HII family. The cofactor is Mn(2+). Requires Mg(2+) as cofactor.

It localises to the cytoplasm. It carries out the reaction Endonucleolytic cleavage to 5'-phosphomonoester.. Functionally, endonuclease that specifically degrades the RNA of RNA-DNA hybrids. The polypeptide is Ribonuclease HII (Agrobacterium fabrum (strain C58 / ATCC 33970) (Agrobacterium tumefaciens (strain C58))).